We begin with the raw amino-acid sequence, 79 residues long: MSRLGIMVLTLLLLVFIVTSHQDAGEKQATQRAAINFRWKRSLTRRTATEECEEYCEDEEKTCCGEEDGEPVCARFCLG.

The first 20 residues, 1–20 (MSRLGIMVLTLLLLVFIVTS), serve as a signal peptide directing secretion. Positions 21–44 (HQDAGEKQATQRAAINFRWKRSLT) are excised as a propeptide. Disulfide bonds link C52-C64, C56-C73, and C63-C77. Residue L78 is modified to Leucine amide.

Belongs to the conotoxin O3 superfamily. In terms of tissue distribution, expressed by the venom duct.

The protein localises to the secreted. This chain is Conotoxin ArMSGL-0122, found in Conus arenatus (Sand-dusted cone).